A 453-amino-acid polypeptide reads, in one-letter code: Omega-3 fatty acid desaturase, chloroplastic (453 aa).

Residues 171 to 175 carry the Histidine box-1 motif; that stretch reads HDCGH. The short motif at 207–211 is the Histidine box-2 element; it reads HRTHH. A Histidine box-3 motif is present at residues 374 to 378; the sequence is HVIHH.

This sequence belongs to the fatty acid desaturase type 1 family.

Its subcellular location is the plastid. It localises to the chloroplast membrane. It participates in lipid metabolism; polyunsaturated fatty acid biosynthesis. Its function is as follows. Chloroplast omega-3 fatty acid desaturase introduces the third double bond in the biosynthesis of 16:3 and 18:3 fatty acids, important constituents of plant membranes. It is thought to use ferredoxin as an electron donor and to act on fatty acids esterified to galactolipids, sulfolipids and phosphatidylglycerol. The protein is Omega-3 fatty acid desaturase, chloroplastic (FAD7) of Glycine max (Soybean).